Consider the following 442-residue polypeptide: Lipoyl synthase, apicoplast (442 aa).

The N-terminal stretch at 1 to 23 (MRVLTPSLYIYAFFIFCVRFKCG) is a signal peptide. The segment at 104-154 (LGEHQLKGKRKESATNVEKEKKEKEQQEERLPVPKVGNKMPEKKPDWFHVP) is disordered. The span at 114-135 (KESATNVEKEKKEKEQQEERLP) shows a compositional bias: basic and acidic residues. Residues C177, C182, C188, C203, C207, C210, and S418 each coordinate [4Fe-4S] cluster. Positions 189-407 (WNIGTATIML…KEEGMKMGFK (219 aa)) constitute a Radical SAM core domain.

It belongs to the radical SAM superfamily. Lipoyl synthase family. [4Fe-4S] cluster serves as cofactor.

Its subcellular location is the plastid. The protein resides in the apicoplast. The catalysed reaction is [[Fe-S] cluster scaffold protein carrying a second [4Fe-4S](2+) cluster] + N(6)-octanoyl-L-lysyl-[protein] + 2 oxidized [2Fe-2S]-[ferredoxin] + 2 S-adenosyl-L-methionine + 4 H(+) = [[Fe-S] cluster scaffold protein] + N(6)-[(R)-dihydrolipoyl]-L-lysyl-[protein] + 4 Fe(3+) + 2 hydrogen sulfide + 2 5'-deoxyadenosine + 2 L-methionine + 2 reduced [2Fe-2S]-[ferredoxin]. Its pathway is protein modification; protein lipoylation via endogenous pathway; protein N(6)-(lipoyl)lysine from octanoyl-[acyl-carrier-protein]: step 2/2. Its function is as follows. Catalyzes the radical-mediated insertion of two sulfur atoms into the C-6 and C-8 positions of the octanoyl moiety bound to the lipoyl domains of lipoate-dependent enzymes, thereby converting the octanoylated domains into lipoylated derivatives. The chain is Lipoyl synthase, apicoplast from Plasmodium knowlesi (strain H).